Reading from the N-terminus, the 651-residue chain is Coiled-coil domain-containing protein 81 (651 aa).

The interval leucine 194–glutamine 314 is disordered. Serine 206 bears the Phosphoserine mark. 2 stretches are compositionally biased toward basic and acidic residues: residues arginine 212 to proline 222 and glycine 232 to glycine 250. Residues serine 265–serine 275 show a composition bias toward polar residues. Phosphoserine is present on residues serine 273, serine 275, serine 294, and serine 416. 2 coiled-coil regions span residues serine 428–alanine 465 and lysine 539–alanine 566.

The protein localises to the cytoplasm. The protein resides in the cytoskeleton. It is found in the microtubule organizing center. It localises to the centrosome. In Rattus norvegicus (Rat), this protein is Coiled-coil domain-containing protein 81 (Ccdc81).